Reading from the N-terminus, the 227-residue chain is Agamous-like MADS-box protein AGL8 homolog (227 aa).

Positions 3–57 (RGRVQLKRIENKINRQVTFSKRRSGLLKKAHEISVLCDAEVGLIVFSTKGKLFEY) constitute an MADS-box domain. In terms of domain architecture, K-box spans 88–178 (PVSWTLEHRK…SKKVKEREKS (91 aa)).

Flower specific.

It localises to the nucleus. Probable transcription factor. This chain is Agamous-like MADS-box protein AGL8 homolog (TDR4), found in Solanum lycopersicum (Tomato).